The following is an 83-amino-acid chain: Cytochrome c oxidase subunit 12, mitochondrial (83 aa).

Residues 24 to 67 enclose the CHCH domain; the sequence is TKHCWQSYVDYHKCVNMKGEDFAPCKVFWKTYNALCPLDWIEKW. The Cx9C motif motif lies at 27–37; that stretch reads CWQSYVDYHKC. 2 cysteine pairs are disulfide-bonded: cysteine 27–cysteine 59 and cysteine 37–cysteine 48. The Cx10C motif signature appears at 48–59; sequence CKVFWKTYNALC. Phosphoserine is present on serine 82.

The protein belongs to the cytochrome c oxidase subunit 6B family. As to quaternary structure, component of the cytochrome c oxidase (complex IV, CIV), a multisubunit enzyme composed of 12 subunits. The complex is composed of a catalytic core of 3 subunits COX1, COX2 and COX3, encoded in the mitochondrial DNA, and 9 supernumerary subunits COX4, COX5A (or COX5B), COX6, COX7, COX8, COX9, COX12, COX13 and COX26, which are encoded in the nuclear genome. The complex exists as a monomer or a dimer and forms supercomplexes (SCs) in the inner mitochondrial membrane with a dimer of ubiquinol-cytochrome c oxidoreductase (cytochrome b-c1 complex, complex III, CIII), resulting in 2 different assemblies (supercomplexes III(2)IV and III(2)IV(2)).

It localises to the mitochondrion inner membrane. Its pathway is energy metabolism; oxidative phosphorylation. Functionally, component of the cytochrome c oxidase, the last enzyme in the mitochondrial electron transport chain which drives oxidative phosphorylation. The respiratory chain contains 3 multisubunit complexes succinate dehydrogenase (complex II, CII), ubiquinol-cytochrome c oxidoreductase (cytochrome b-c1 complex, complex III, CIII) and cytochrome c oxidase (complex IV, CIV), that cooperate to transfer electrons derived from NADH and succinate to molecular oxygen, creating an electrochemical gradient over the inner membrane that drives transmembrane transport and the ATP synthase. Cytochrome c oxidase is the component of the respiratory chain that catalyzes the reduction of oxygen to water. Electrons originating from reduced cytochrome c in the intermembrane space (IMS) are transferred via the dinuclear copper A center (CU(A)) of COX2 and heme A of COX1 to the active site in COX1, a binuclear center (BNC) formed by heme A3 and copper B (CU(B)). The BNC reduces molecular oxygen to 2 water molecules unsing 4 electrons from cytochrome c in the IMS and 4 protons from the mitochondrial matrix. This Saccharomyces cerevisiae (strain ATCC 204508 / S288c) (Baker's yeast) protein is Cytochrome c oxidase subunit 12, mitochondrial (COX12).